The following is a 228-amino-acid chain: Delta-type opioid receptor (228 aa).

A helical membrane pass occupies residues G1 to V3. At R4–N13 the chain is on the cytoplasmic side. A helical transmembrane segment spans residues I14–L38. At M39 to K50 the chain is on the extracellular side. A disulfide bond links C49 and C126. A helical membrane pass occupies residues A51 to V72. Topologically, residues D73–A91 are cytoplasmic. The helical transmembrane segment at K92 to M114 threads the bilayer. The Extracellular segment spans residues A115–S134. The chain crosses the membrane as a helical span at residues W135–L166. The Cytoplasmic portion of the chain corresponds to R167–R189. A helical membrane pass occupies residues M190 to W212. Residues T213–A227 lie on the Extracellular side of the membrane.

Belongs to the G-protein coupled receptor 1 family. As to quaternary structure, may form homooligomers. Forms a heterodimer with OPRM1. Interacts with GPRASP1. Interacts with RTP4; the interaction promotes cell surface localization of the OPRD1-OPRM1 heterodimer. In terms of processing, ubiquitinated. A basal ubiquitination seems not to be related to degradation. Ubiquitination is increased upon formation of OPRM1:OPRD1 oligomers leading to proteasomal degradation; the ubiquitination is diminished by RTP4. As to expression, detected in myenteric plexus and smooth muscle (at protein level). Detected in brain and intestine.

The protein resides in the cell membrane. G-protein coupled receptor that functions as a receptor for endogenous enkephalins and for a subset of other opioids. Ligand binding causes a conformation change that triggers signaling via guanine nucleotide-binding proteins (G proteins) and modulates the activity of down-stream effectors, such as adenylate cyclase. Signaling leads to the inhibition of adenylate cyclase activity. Inhibits neurotransmitter release by reducing calcium ion currents and increasing potassium ion conductance. Plays a role in the perception of pain and in opiate-mediated analgesia. Plays a role in developing analgesic tolerance to morphine. The protein is Delta-type opioid receptor (OPRD1) of Sus scrofa (Pig).